A 514-amino-acid polypeptide reads, in one-letter code: Peptide chain release factor 3 (514 aa).

The tr-type G domain maps to 8–268 (KKRRTFAIIS…IFLKFAPEPH (261 aa)). Residues 17–24 (SHPDAGKT), 85–89 (DTPGH), and 139–142 (NKLD) each bind GTP.

It belongs to the TRAFAC class translation factor GTPase superfamily. Classic translation factor GTPase family. PrfC subfamily.

It localises to the cytoplasm. Increases the formation of ribosomal termination complexes and stimulates activities of RF-1 and RF-2. It binds guanine nucleotides and has strong preference for UGA stop codons. It may interact directly with the ribosome. The stimulation of RF-1 and RF-2 is significantly reduced by GTP and GDP, but not by GMP. In Streptococcus pneumoniae (strain 70585), this protein is Peptide chain release factor 3.